Reading from the N-terminus, the 218-residue chain is Cold-regulated protein 28 (218 aa).

2 disordered regions span residues 1-51 (MEND…ADSK) and 166-218 (TKHS…KPRT). Low complexity predominate over residues 20-37 (EASAESQSESTLSNSLDS). Residues 186-207 (GEVSKKREREANNDDSSLKEDQ) are compositionally biased toward basic and acidic residues.

It is found in the nucleus. In terms of biological role, together with COR27, involved in central circadian clock regulation and in flowering promotion, by binding to the chromatin of clock-associated evening genes TOC1, PRR5, ELF4 and cold-responsive genes in order to repress their transcription. Negative regulator of freezing tolerance. The chain is Cold-regulated protein 28 from Arabidopsis thaliana (Mouse-ear cress).